Consider the following 202-residue polypeptide: Protein FAR-RED ELONGATED HYPOCOTYL 1 (202 aa).

Ser39 is subject to Phosphoserine. The Nuclear localization sequence (NLS) signature appears at 40 to 43; that stretch reads KKRK. A Nuclear export sequence (NES) motif is present at residues 54–57; that stretch reads LLPL. Thr61 carries the post-translational modification Phosphothreonine.

This sequence belongs to the FHY1 protein family. Homodimer and heterodimer with FHL. Interacts with underphosphorylated PHYA, especially upon far-red (FR) light illumination. Binds to LAF1 and HFR1. Forms PHYA/FHY1/HFR1 complex in darkness but dissociates from PHYA and HFR1 in response to continuous FR light (FRc). Inactivated by rapid reversible PHYA-mediated phosphorylation at Ser-39 and Thr-61 in red light (R), thus inhibiting PHYA signaling in a negative feedback loop; this ensures the seedling deetiolation process in response to a R-enriched light condition. Subsequent exposure to far-red light (FR) after the R conditions leads to dephosphorylation. The phosphorylated form is cytoplasmic only and unable to bind to chromatin at direct target genes whereas the unphosphorylated form can shuttle from cytoplasm to nucleus. As to expression, expressed in hypocotyl cells of etiolated plants.

The protein resides in the nucleus. It localises to the cytoplasm. Its function is as follows. Key regulator of far red / red (FR/R) spectrum-specific responses essential for the adaption to changing light conditions (e.g. de-etiolation), essentially by regulating PHYA shuttling from the cytoplasm to the nucleus and by directly regulating the expression of some target genes, depending on light conditions and phosphorylation status. Binds chromatin at target genes promoters, especially in FR light conditions. Can activate transcription of different genes, some being in a phytochrome A (PHYA)-dependent and other in a PHYA-independent manners. Controls specific aspects of plant development, such as the inhibition of seed germination under FR during salt stress. Essential for light-regulated PHYA nuclear accumulation and subsequent PHYA phototropic signaling processes involved in photomorphogenesis. Mediates the association of PHYA with HFR1 and LAF1 in the nucleus in response to FR conditions. PHYA-specific signal transducer in response to continuous FR lights. Contributes to inhibition of hypocotyl elongation in continuous blue light (B). The protein is Protein FAR-RED ELONGATED HYPOCOTYL 1 of Arabidopsis thaliana (Mouse-ear cress).